The sequence spans 384 residues: Cysteine desulfurase (384 aa).

Pyridoxal 5'-phosphate is bound by residues 74–75, asparagine 154, glutamine 180, and 200–202; these read GT and SGH. Lysine 203 carries the N6-(pyridoxal phosphate)lysine modification. Threonine 238 lines the pyridoxal 5'-phosphate pocket. The active-site Cysteine persulfide intermediate is the cysteine 325. A [2Fe-2S] cluster-binding site is contributed by cysteine 325.

This sequence belongs to the class-V pyridoxal-phosphate-dependent aminotransferase family. NifS/IscS subfamily. Homodimer. Pyridoxal 5'-phosphate is required as a cofactor.

The catalysed reaction is (sulfur carrier)-H + L-cysteine = (sulfur carrier)-SH + L-alanine. In terms of biological role, catalyzes the removal of elemental sulfur atoms from cysteine to produce alanine. Seems to participate in the biosynthesis of the nitrogenase metalloclusters by providing the inorganic sulfur required for the Fe-S core formation. This is Cysteine desulfurase from Rhodobacter capsulatus (Rhodopseudomonas capsulata).